We begin with the raw amino-acid sequence, 218 residues long: Cytochrome b6 (218 aa).

A helical transmembrane segment spans residues 35–55 (IFYCLGGITLVCFLIQFATGF). Heme c is bound at residue C38. The heme b site is built by H89 and H103. A run of 3 helical transmembrane segments spans residues 93 to 113 (ASMMVLMLILHVFRVYLTGGF), 119 to 139 (LTWVTGVVMAVITVAFGVTGY), and 189 to 209 (LHTFVLPWTLAIFMLMHFLMI). 2 residues coordinate heme b: H190 and H205.

This sequence belongs to the cytochrome b family. PetB subfamily. The 4 large subunits of the cytochrome b6-f complex are cytochrome b6, subunit IV (17 kDa polypeptide, PetD), cytochrome f and the Rieske protein, while the 4 small subunits are PetG, PetL, PetM and PetN. The complex functions as a dimer. The cofactor is heme b. Heme c serves as cofactor.

The protein resides in the cellular thylakoid membrane. Component of the cytochrome b6-f complex, which mediates electron transfer between photosystem II (PSII) and photosystem I (PSI), cyclic electron flow around PSI, and state transitions. The protein is Cytochrome b6 of Prochlorococcus marinus (strain SARG / CCMP1375 / SS120).